The sequence spans 612 residues: MPEYRSKTSTHGRNMAGARALWRATGMKDGDFHKPIIAIANSFTQFVPGHVHLKDLGQLVAREIERVGGVAKEFDTIAVDDGIAMGHDGMLYSLPSREIIADSVEYMVNAHCADALVCISNCDKITPGMLMAALRLNIPTVFVSGGPMEAGKTKLADHNLDLIDAMVIAADDSASDEKVAEFERSACPTCGSCSGMFTANSMNCLTEALGLSLPGNGTVVATHADREQLFLRAGRVAVELCHRWYGGEDPTALPRGIATFEAFENAMTLDIAMGGSTNTILHLLAAAQEGEVPFGMRDIDRLSKRVPQLCKVAPNTPKYHIEDVHRAGGIMSILGELARGGLLHTNAATVHTRTLADAIAQWDVTQVDDDKVHTFYKAGPAGIPTQIAFSQATRWDTLDTDRSEGCIRDVAHAFSQEGGLAVLYGNIARDGCVVKTAGVDESIHVFEGNARVYESQDSAVKGILADEVKAGDVVVIRYEGPKGGPGMQEMLYPTSYLKSKGLGKHCALLTDGRFSGGTSGLSIGHASPEAAAGGAIGLVRNGDKILIDIPKRSIDLLVSDEELAARRTEQDAKGWKPVEVRPRKVTTALKAYALLATSADKGAVRDKAMLDG.

Asp-81 lines the Mg(2+) pocket. Cys-122 lines the [2Fe-2S] cluster pocket. Mg(2+) contacts are provided by Asp-123 and Lys-124. Position 124 is an N6-carboxylysine (Lys-124). Residue Cys-193 participates in [2Fe-2S] cluster binding. Glu-489 is a Mg(2+) binding site. Ser-515 (proton acceptor) is an active-site residue.

This sequence belongs to the IlvD/Edd family. As to quaternary structure, homodimer. It depends on [2Fe-2S] cluster as a cofactor. Requires Mg(2+) as cofactor.

The enzyme catalyses (2R)-2,3-dihydroxy-3-methylbutanoate = 3-methyl-2-oxobutanoate + H2O. The catalysed reaction is (2R,3R)-2,3-dihydroxy-3-methylpentanoate = (S)-3-methyl-2-oxopentanoate + H2O. It functions in the pathway amino-acid biosynthesis; L-isoleucine biosynthesis; L-isoleucine from 2-oxobutanoate: step 3/4. The protein operates within amino-acid biosynthesis; L-valine biosynthesis; L-valine from pyruvate: step 3/4. In terms of biological role, functions in the biosynthesis of branched-chain amino acids. Catalyzes the dehydration of (2R,3R)-2,3-dihydroxy-3-methylpentanoate (2,3-dihydroxy-3-methylvalerate) into 2-oxo-3-methylpentanoate (2-oxo-3-methylvalerate) and of (2R)-2,3-dihydroxy-3-methylbutanoate (2,3-dihydroxyisovalerate) into 2-oxo-3-methylbutanoate (2-oxoisovalerate), the penultimate precursor to L-isoleucine and L-valine, respectively. This chain is Dihydroxy-acid dehydratase, found in Xanthomonas campestris pv. campestris (strain B100).